Consider the following 574-residue polypeptide: Glutamyl-tRNA(Gln) amidotransferase subunit B, mitochondrial (574 aa).

The protein belongs to the GatB/GatE family. GatB subfamily. As to quaternary structure, subunit of the heterotrimeric GatCAB amidotransferase (AdT) complex, composed of A, B and C subunits.

It is found in the mitochondrion. It catalyses the reaction L-glutamyl-tRNA(Gln) + L-glutamine + ATP + H2O = L-glutaminyl-tRNA(Gln) + L-glutamate + ADP + phosphate + H(+). Functionally, allows the formation of correctly charged Gln-tRNA(Gln) through the transamidation of misacylated Glu-tRNA(Gln) in the mitochondria. The reaction takes place in the presence of glutamine and ATP through an activated gamma-phospho-Glu-tRNA(Gln). The polypeptide is Glutamyl-tRNA(Gln) amidotransferase subunit B, mitochondrial (Phytophthora infestans (strain T30-4) (Potato late blight agent)).